A 719-amino-acid polypeptide reads, in one-letter code: Alpha-galactosidase 2 (719 aa).

Residue D472 is the Nucleophile of the active site. D542 acts as the Proton donor in catalysis.

Belongs to the glycosyl hydrolase 36 family.

It carries out the reaction Hydrolysis of terminal, non-reducing alpha-D-galactose residues in alpha-D-galactosides, including galactose oligosaccharides, galactomannans and galactolipids.. Alpha-galactosidase associated with the sucrase operon. The polypeptide is Alpha-galactosidase 2 (agaS) (Pediococcus pentosaceus).